Reading from the N-terminus, the 287-residue chain is Glycine--tRNA ligase alpha subunit (287 aa).

It belongs to the class-II aminoacyl-tRNA synthetase family. As to quaternary structure, tetramer of two alpha and two beta subunits.

It localises to the cytoplasm. It carries out the reaction tRNA(Gly) + glycine + ATP = glycyl-tRNA(Gly) + AMP + diphosphate. The polypeptide is Glycine--tRNA ligase alpha subunit (Campylobacter jejuni subsp. jejuni serotype O:23/36 (strain 81-176)).